Reading from the N-terminus, the 941-residue chain is Glycine dehydrogenase (decarboxylating) (941 aa).

At Lys-692 the chain carries N6-(pyridoxal phosphate)lysine.

This sequence belongs to the GcvP family. The glycine cleavage system is composed of four proteins: P, T, L and H. Pyridoxal 5'-phosphate serves as cofactor.

The catalysed reaction is N(6)-[(R)-lipoyl]-L-lysyl-[glycine-cleavage complex H protein] + glycine + H(+) = N(6)-[(R)-S(8)-aminomethyldihydrolipoyl]-L-lysyl-[glycine-cleavage complex H protein] + CO2. Functionally, the glycine cleavage system catalyzes the degradation of glycine. The P protein binds the alpha-amino group of glycine through its pyridoxal phosphate cofactor; CO(2) is released and the remaining methylamine moiety is then transferred to the lipoamide cofactor of the H protein. In Mycobacterium tuberculosis (strain ATCC 25177 / H37Ra), this protein is Glycine dehydrogenase (decarboxylating).